A 430-amino-acid chain; its full sequence is Dihydroorotase (430 aa).

Residues H60 and H62 each coordinate Zn(2+). Substrate-binding positions include H62–R64 and N94. Zn(2+)-binding residues include D151, H178, and H231. N277 lines the substrate pocket. D304 is a binding site for Zn(2+). The active site involves D304. Substrate contacts are provided by residues H308 and F322 to G323.

The protein belongs to the metallo-dependent hydrolases superfamily. DHOase family. Class I DHOase subfamily. Zn(2+) serves as cofactor.

The enzyme catalyses (S)-dihydroorotate + H2O = N-carbamoyl-L-aspartate + H(+). Its pathway is pyrimidine metabolism; UMP biosynthesis via de novo pathway; (S)-dihydroorotate from bicarbonate: step 3/3. Catalyzes the reversible cyclization of carbamoyl aspartate to dihydroorotate. The protein is Dihydroorotase of Carboxydothermus hydrogenoformans (strain ATCC BAA-161 / DSM 6008 / Z-2901).